The chain runs to 116 residues: Tachykinin-3 (116 aa).

Positions 1–20 are cleaved as a signal peptide; that stretch reads MRSAMLFAAVLALSLAWTFG. Residues 21-79 constitute a propeptide that is removed on maturation; the sequence is AACEEPQEQGGRLSKDSDLSLLPPPLLRRLYDSRSISLEGLLKVLSKASVGPKETSLPQ. A Methionine amide modification is found at methionine 91. The disordered stretch occupies residues 92–116; it reads GKRNSQPDTPADVVEENTPSFGVLK. A propeptide spanning residues 95-116 is cleaved from the precursor; the sequence is NSQPDTPADVVEENTPSFGVLK.

This sequence belongs to the tachykinin family.

It localises to the secreted. Functionally, tachykinins are active peptides which excite neurons, evoke behavioral responses, are potent vasodilators and secretagogues, and contract (directly or indirectly) many smooth muscles. Is a critical central regulator of gonadal function. The polypeptide is Tachykinin-3 (Tac3) (Rattus norvegicus (Rat)).